The primary structure comprises 537 residues: MYSNENYAEEGYEDYGYDAGMIDDGYDRSYYPMHEDVKKFLVYFSSVIKNGVVYEIQNLYENTFPKLSEQHFEKKAWPSEEEVAHLVDNDSLFMILYKELYYRHLHARIQKGPSLEQRLNSFYNYCNFFNHILPSKEPVQLELPDIWLWELIDEFVYQFQNFAQYRARLSDKSEEEMDMLLNNNSKVWNILCILNVLHSLVSMSKIKDQLEAAAAGRDPEEVAGEFGRHSFYKMLGYFSLVGLLRVHSLLGDYHQAIKVLEPIEIHKKSQYSHIPACQISTSYYVGFAYMMMRRYSDAIRTFSSILLYIQRTKQLYSARSYQNDQINKQTDQMYHLLAICLVLHPQCIDESIQQVLREKNYHDNMYKMQCGDLETFRNFFVFACPKFVSPVPPPSDAPIDDYVKEALEHQTNVFMDEVRQQQELPTIRSYLKLYTTLPLLKLASFMDHIPQDEIGEQKIENLLTHLLCFKHKMKNIVWTKGASGLEGKFQSGSELDFYIDKDMIHIADTKVSHRYGDFFIRKIMKFEDLNRRLHNLK.

A PCI domain is found at 301 to 513; that stretch reads TFSSILLYIQ…IHIADTKVSH (213 aa).

It belongs to the eIF-3 subunit L family. In terms of assembly, component of the eukaryotic translation initiation factor 3 (eIF-3) complex.

It is found in the cytoplasm. In terms of biological role, component of the eukaryotic translation initiation factor 3 (eIF-3) complex, which is involved in protein synthesis of a specialized repertoire of mRNAs and, together with other initiation factors, stimulates binding of mRNA and methionyl-tRNAi to the 40S ribosome. The eIF-3 complex specifically targets and initiates translation of a subset of mRNAs involved in cell proliferation. The sequence is that of Eukaryotic translation initiation factor 3 subunit L from Aedes aegypti (Yellowfever mosquito).